Reading from the N-terminus, the 181-residue chain is Large ribosomal subunit protein uL10 (181 aa).

This sequence belongs to the universal ribosomal protein uL10 family. As to quaternary structure, part of the ribosomal stalk of the 50S ribosomal subunit. The N-terminus interacts with L11 and the large rRNA to form the base of the stalk. The C-terminus forms an elongated spine to which L12 dimers bind in a sequential fashion forming a multimeric L10(L12)X complex.

Forms part of the ribosomal stalk, playing a central role in the interaction of the ribosome with GTP-bound translation factors. The polypeptide is Large ribosomal subunit protein uL10 (Acidobacterium capsulatum (strain ATCC 51196 / DSM 11244 / BCRC 80197 / JCM 7670 / NBRC 15755 / NCIMB 13165 / 161)).